The following is a 268-amino-acid chain: Tryptophan synthase alpha chain (268 aa).

Catalysis depends on proton acceptor residues E49 and D60.

This sequence belongs to the TrpA family. In terms of assembly, tetramer of two alpha and two beta chains.

It catalyses the reaction (1S,2R)-1-C-(indol-3-yl)glycerol 3-phosphate + L-serine = D-glyceraldehyde 3-phosphate + L-tryptophan + H2O. It participates in amino-acid biosynthesis; L-tryptophan biosynthesis; L-tryptophan from chorismate: step 5/5. Its function is as follows. The alpha subunit is responsible for the aldol cleavage of indoleglycerol phosphate to indole and glyceraldehyde 3-phosphate. In Pseudomonas paraeruginosa (strain DSM 24068 / PA7) (Pseudomonas aeruginosa (strain PA7)), this protein is Tryptophan synthase alpha chain.